The following is a 125-amino-acid chain: Anticoagulant salivary protein 14 (125 aa).

The N-terminal stretch at 1-21 (MGLTGTMLVLVSLAFFGSAAA) is a signal peptide. N-linked (GlcNAc...) asparagine glycans are attached at residues Asn-26, Asn-81, and Asn-87. Over residues 75–86 (GECHLTNNSGGP) the composition is skewed to polar residues. The disordered stretch occupies residues 75–125 (GECHLTNNSGGPNETDDYTPAPTEKPKQKKKKTKKTKKPKRKSKKDQEKNL). Positions 91-125 (DYTPAPTEKPKQKKKKTKKTKKPKRKSKKDQEKNL) are responsible for anticoagulant activity. Positions 101-118 (KQKKKKTKKTKKPKRKSK) are enriched in basic residues.

Belongs to the salp14 family. Salivary gland (at protein level). Saliva (at protein level).

The protein localises to the secreted. Its function is as follows. Salivary anticoagulant protein that facilitates blood feeding of adult ticks on vertebrate species. Inhibits host coagulation factor Xa (F10). Blocks the assembly and/or early activity of the prothrombinase complex (Xa-Va/F10-F5). Inhibits the lectin pathway of complement system activation in the host. The polypeptide is Anticoagulant salivary protein 14 (Ixodes scapularis (Black-legged tick)).